Here is a 338-residue protein sequence, read N- to C-terminus: Nicotinate-nucleotide--dimethylbenzimidazole phosphoribosyltransferase (338 aa).

Catalysis depends on Glu305, which acts as the Proton acceptor.

It belongs to the CobT family.

It catalyses the reaction 5,6-dimethylbenzimidazole + nicotinate beta-D-ribonucleotide = alpha-ribazole 5'-phosphate + nicotinate + H(+). It participates in nucleoside biosynthesis; alpha-ribazole biosynthesis; alpha-ribazole from 5,6-dimethylbenzimidazole: step 1/2. Catalyzes the synthesis of alpha-ribazole-5'-phosphate from nicotinate mononucleotide (NAMN) and 5,6-dimethylbenzimidazole (DMB). The protein is Nicotinate-nucleotide--dimethylbenzimidazole phosphoribosyltransferase of Rhizobium etli (strain ATCC 51251 / DSM 11541 / JCM 21823 / NBRC 15573 / CFN 42).